A 208-amino-acid polypeptide reads, in one-letter code: MKVVEVKHPLVRHKIGLMREGDISTKRFRELAAEVGSLLTYEATADFETETVTIEGWNGPVEVDQIKGKKVTVVPILRAGLGMMDGVLEHIPSARISVVGIYRDEETLEPVPYFEKLASDMNERIALIVDPMLATGGSMIATIDLLKKRGCTSIKALVLVAAPEGIKALEAAHPDVELYTAAIDRCLNEKGYILPGLGDAGDKIFGTK.

Residues Arg78, Arg103, and 130-138 (DPMLATGGS) contribute to the 5-phospho-alpha-D-ribose 1-diphosphate site. Uracil contacts are provided by residues Ile193 and 198-200 (GDA). Asp199 lines the 5-phospho-alpha-D-ribose 1-diphosphate pocket.

This sequence belongs to the UPRTase family. It depends on Mg(2+) as a cofactor.

It carries out the reaction UMP + diphosphate = 5-phospho-alpha-D-ribose 1-diphosphate + uracil. The protein operates within pyrimidine metabolism; UMP biosynthesis via salvage pathway; UMP from uracil: step 1/1. Allosterically activated by GTP. Catalyzes the conversion of uracil and 5-phospho-alpha-D-ribose 1-diphosphate (PRPP) to UMP and diphosphate. The sequence is that of Uracil phosphoribosyltransferase from Shewanella sp. (strain ANA-3).